Consider the following 59-residue polypeptide: Large ribosomal subunit protein uL30 (59 aa).

The protein belongs to the universal ribosomal protein uL30 family. As to quaternary structure, part of the 50S ribosomal subunit.

In Haemophilus ducreyi (strain 35000HP / ATCC 700724), this protein is Large ribosomal subunit protein uL30.